Reading from the N-terminus, the 369-residue chain is Ferredoxin--NADP reductase 2 (369 aa).

Positions 1-21 (MDLSIPNPVADATRQVEGGSP) are disordered. FAD contacts are provided by D58, Q66, Y71, V111, F146, D311, and T352.

The protein belongs to the ferredoxin--NADP reductase type 2 family. Homodimer. The cofactor is FAD.

The enzyme catalyses 2 reduced [2Fe-2S]-[ferredoxin] + NADP(+) + H(+) = 2 oxidized [2Fe-2S]-[ferredoxin] + NADPH. This chain is Ferredoxin--NADP reductase 2, found in Cupriavidus taiwanensis (strain DSM 17343 / BCRC 17206 / CCUG 44338 / CIP 107171 / LMG 19424 / R1) (Ralstonia taiwanensis (strain LMG 19424)).